Consider the following 151-residue polypeptide: Putative olfactory receptor 13C6 (151 aa).

The Extracellular segment spans residues 1 to 27 (MVSANQTASVTEFILLGLSAHPKLEKT). A glycan (N-linked (GlcNAc...) asparagine) is linked at N5. The helical transmembrane segment at 28-48 (FFVLILLMYLVILLGNGVLIL) threads the bilayer. The Cytoplasmic segment spans residues 49 to 61 (MTVSNSHLHMPMY). The chain crosses the membrane as a helical span at residues 62 to 82 (FFLGNLSFLDICYTTSSVPLI). The Extracellular portion of the chain corresponds to 83-100 (LDSFLTPRKTISFSACAV). A helical membrane pass occupies residues 101–121 (QMFLSFAMGATECVLLSMMAF).

Belongs to the G-protein coupled receptor 1 family.

It localises to the cell membrane. Odorant receptor. The protein is Putative olfactory receptor 13C6 of Homo sapiens (Human).